Here is a 106-residue protein sequence, read N- to C-terminus: UPF0145 protein CKL_2433 (106 aa).

This sequence belongs to the UPF0145 family.

The chain is UPF0145 protein CKL_2433 from Clostridium kluyveri (strain ATCC 8527 / DSM 555 / NBRC 12016 / NCIMB 10680 / K1).